Here is a 385-residue protein sequence, read N- to C-terminus: MNPVPAQREYFLDSIRAWLMLLGIPFHISLIYSSHTWHVNSAESSLWLTLFNDFIHSFRMQVFFVISGYFSYMLFLRYPLKKWWKVRVERVGIPMLTAIPLLTLPQFIMLQYVKGKAESWPGLSLYDKYNTLAWELISHLWFLLVLVVMTTLCVWIFKRIRNNLENSDKTNKKFSMVKLSVIFLCLGIGYAVIRRTIFIVYPPILSNGMFNFIVMQTLFYLPFFILGALAFIFPHLKALFTTPSRGCTLAAALAFVAYLLNQRYGSGDAWMYETESVITMVLGLWMVNVVFSFGHRLLNFQSARVTYFVNASLFIYLVHHPLTLFFGAYITPHITSNWLGFLCGLIFVVGIAIILYEIHLRIPLLKFLFSGKPVVKRENDKAPAR.

A run of 10 helical transmembrane segments spans residues alanine 17–tryptophan 37, methionine 60–leucine 80, valine 91–glutamine 111, isoleucine 137–phenylalanine 157, lysine 173–isoleucine 193, phenylalanine 212–isoleucine 232, leucine 239–leucine 259, threonine 274–glycine 294, alanine 311–threonine 331, and tryptophan 338–isoleucine 358.

This sequence belongs to the acyltransferase 3 family. OpgC subfamily.

The protein localises to the cell membrane. Its pathway is glycan metabolism; osmoregulated periplasmic glucan (OPG) biosynthesis. In terms of biological role, necessary for the succinyl substitution of periplasmic glucans. Could catalyze the transfer of succinyl residues from the cytoplasmic side of the membrane to the nascent glucan backbones on the periplasmic side of the membrane. The chain is Glucans biosynthesis protein C from Escherichia coli (strain K12 / MC4100 / BW2952).